A 442-amino-acid chain; its full sequence is MKEQKKVFIKTLGCQMNEYDSARMHEVLNEHFDTVKTDDYKDADIILINTCSIREKAQEKVFHELGRWKGLKKTNEDLIIGVGGCVASQEGENIIKRAPFVDLVFGPQTIHRLPEMIKQKQKSQQSQVDISFPEVEKFDYLPEPKAEGAKAYVSIMEGCDKYCSYCVVPYTRGPEVNRPFEDVLAECAILAEQGVKEITLLGQNVNHYLGPMENGQTADLALLIHFIAEIDGIERIRFTTSHPVEFSQNLIDAYATVPELANHLHLPVQHGSDRILINMKRNHTILEFKQKIRKLRAIRPDITISSDFIVGFPGETEEDFQKLLDLVKEINFDQSFSFIYSKRPGTPAADLPDDTPMEVKKDRLKRLQDLLNSNAQIISRQMVGTNQRILVDGTSKKDDNILSGRTENNRVVNFKGDKSLIGQFAMVKITESLPNSLRGELI.

An MTTase N-terminal domain is found at 5 to 122 (KKVFIKTLGC…LPEMIKQKQK (118 aa)). [4Fe-4S] cluster contacts are provided by Cys14, Cys51, Cys85, Cys159, Cys163, and Cys166. A Radical SAM core domain is found at 145 to 378 (KAEGAKAYVS…DLLNSNAQII (234 aa)). One can recognise a TRAM domain in the interval 380–442 (RQMVGTNQRI…LPNSLRGELI (63 aa)).

It belongs to the methylthiotransferase family. MiaB subfamily. In terms of assembly, monomer. Requires [4Fe-4S] cluster as cofactor.

It localises to the cytoplasm. The catalysed reaction is N(6)-dimethylallyladenosine(37) in tRNA + (sulfur carrier)-SH + AH2 + 2 S-adenosyl-L-methionine = 2-methylsulfanyl-N(6)-dimethylallyladenosine(37) in tRNA + (sulfur carrier)-H + 5'-deoxyadenosine + L-methionine + A + S-adenosyl-L-homocysteine + 2 H(+). Functionally, catalyzes the methylthiolation of N6-(dimethylallyl)adenosine (i(6)A), leading to the formation of 2-methylthio-N6-(dimethylallyl)adenosine (ms(2)i(6)A) at position 37 in tRNAs that read codons beginning with uridine. This is tRNA-2-methylthio-N(6)-dimethylallyladenosine synthase from Francisella tularensis subsp. holarctica (strain FTNF002-00 / FTA).